Reading from the N-terminus, the 229-residue chain is Peptidyl-prolyl cis-trans isomerase FKBP17-1, chloroplastic (229 aa).

The N-terminal 63 residues, 1 to 63 (MIRCFAWTPL…SISLSIIAVT (63 aa)), are a transit peptide targeting the chloroplast. Residues 105–225 (GDQIEIHYYG…VFDIELVSTR (121 aa)) enclose the PPIase FKBP-type domain.

The protein belongs to the FKBP-type PPIase family.

The protein resides in the plastid. It localises to the chloroplast thylakoid lumen. The enzyme catalyses [protein]-peptidylproline (omega=180) = [protein]-peptidylproline (omega=0). PPIases accelerate the folding of proteins. It catalyzes the cis-trans isomerization of proline imidic peptide bonds in oligopeptides. The chain is Peptidyl-prolyl cis-trans isomerase FKBP17-1, chloroplastic (FKBP17-1) from Arabidopsis thaliana (Mouse-ear cress).